Here is a 101-residue protein sequence, read N- to C-terminus: Small ribosomal subunit protein bS18c (101 aa).

The segment covering 1-19 (MDKSKRPFRKSKRSFRRRL) has biased composition (basic residues). The segment at 1-23 (MDKSKRPFRKSKRSFRRRLPPIG) is disordered.

It belongs to the bacterial ribosomal protein bS18 family. As to quaternary structure, part of the 30S ribosomal subunit.

The protein localises to the plastid. It is found in the chloroplast. The chain is Small ribosomal subunit protein bS18c from Ceratophyllum demersum (Rigid hornwort).